The following is a 137-amino-acid chain: Putative pre-16S rRNA nuclease (137 aa).

It belongs to the YqgF nuclease family.

It is found in the cytoplasm. Its function is as follows. Could be a nuclease involved in processing of the 5'-end of pre-16S rRNA. The polypeptide is Putative pre-16S rRNA nuclease (Bacillus cereus (strain 03BB102)).